A 350-amino-acid polypeptide reads, in one-letter code: Fe(3+) ions import ATP-binding protein FbpC (350 aa).

One can recognise an ABC transporter domain in the interval Leu4 to Leu236. Gly36–Thr43 contributes to the ATP binding site.

The protein belongs to the ABC transporter superfamily. Fe(3+) ion importer (TC 3.A.1.10) family. In terms of assembly, the complex is composed of two ATP-binding proteins (FbpC), two transmembrane proteins (FbpB) and a solute-binding protein (FbpA).

It localises to the cell inner membrane. The catalysed reaction is Fe(3+)(out) + ATP + H2O = Fe(3+)(in) + ADP + phosphate + H(+). In terms of biological role, part of the ABC transporter complex FbpABC involved in Fe(3+) ions import. Responsible for energy coupling to the transport system. The polypeptide is Fe(3+) ions import ATP-binding protein FbpC (Pseudomonas fluorescens (strain Pf0-1)).